The primary structure comprises 335 residues: Nucleoid-associated protein YejK (335 aa).

This sequence belongs to the YejK family.

It is found in the cytoplasm. The protein localises to the nucleoid. This chain is Nucleoid-associated protein YejK, found in Shigella dysenteriae serotype 1 (strain Sd197).